The primary structure comprises 150 residues: Large ribosomal subunit protein uL13 (150 aa).

Belongs to the universal ribosomal protein uL13 family. As to quaternary structure, part of the 50S ribosomal subunit.

Functionally, this protein is one of the early assembly proteins of the 50S ribosomal subunit, although it is not seen to bind rRNA by itself. It is important during the early stages of 50S assembly. This chain is Large ribosomal subunit protein uL13, found in Chlamydia muridarum (strain MoPn / Nigg).